The primary structure comprises 487 residues: N-succinylglutamate 5-semialdehyde dehydrogenase (487 aa).

221 to 226 (GSSRTG) is an NAD(+) binding site. Catalysis depends on residues Glu-244 and Cys-278.

This sequence belongs to the aldehyde dehydrogenase family. AstD subfamily.

The catalysed reaction is N-succinyl-L-glutamate 5-semialdehyde + NAD(+) + H2O = N-succinyl-L-glutamate + NADH + 2 H(+). The protein operates within amino-acid degradation; L-arginine degradation via AST pathway; L-glutamate and succinate from L-arginine: step 4/5. Catalyzes the NAD-dependent reduction of succinylglutamate semialdehyde into succinylglutamate. The sequence is that of N-succinylglutamate 5-semialdehyde dehydrogenase from Pseudomonas putida (strain ATCC 47054 / DSM 6125 / CFBP 8728 / NCIMB 11950 / KT2440).